The chain runs to 747 residues: Histone-lysine N-methyltransferase EZH1 (747 aa).

A disordered region spans residues 188-231 (DEEEDGHNDPSDGKQDDSKEDLPVTRKRKRHAIEGNKKSSKKQF). The segment covering 194-211 (HNDPSDGKQDDSKEDLPV) has biased composition (basic and acidic residues). Residue Lys327 forms a Glycyl lysine isopeptide (Lys-Gly) (interchain with G-Cter in SUMO2) linkage. Positions 368 to 414 (VSASCSNASASAMAETKEGDSDRDTGNDWASSSSEANSRCQTPTKQK) are disordered. The segment covering 369 to 381 (SASCSNASASAMA) has biased composition (low complexity). A compositionally biased stretch (basic and acidic residues) spans 382-393 (ETKEGDSDRDTG). The span at 395 to 414 (DWASSSSEANSRCQTPTKQK) shows a compositional bias: polar residues. A Nuclear localization signal motif is present at residues 491–496 (QKKKRK). In terms of domain architecture, CXC spans 504–606 (CRKIQLKKDN…CKVVSCKNCS (103 aa)). The region spanning 613–728 (KHLLLAPSDV…AGEELFFDYR (116 aa)) is the SET domain.

Belongs to the class V-like SAM-binding methyltransferase superfamily. Histone-lysine methyltransferase family. EZ subfamily. In terms of assembly, component of the PRC2/EED-EZH1 complex, which includes EED, EZH1, SUZ12, RBBP4 and AEBP2. The PRC2/EED-EZH1 is less abundant than the PRC2/EED-EZH2 complex, has weak methyltransferase activity and compacts chromatin in the absence of the methyltransferase cofactor S-adenosyl-L-methionine (SAM). Interacts with EZHIP; the interaction blocks EZH1 methyltransferase activity. In terms of tissue distribution, expressed at high levels in kidney, adrenal gland, testis and brain.

The protein resides in the nucleus. The enzyme catalyses L-lysyl(27)-[histone H3] + 3 S-adenosyl-L-methionine = N(6),N(6),N(6)-trimethyl-L-lysyl(27)-[histone H3] + 3 S-adenosyl-L-homocysteine + 3 H(+). Polycomb group (PcG) protein. Catalytic subunit of the PRC2/EED-EZH1 complex, which methylates 'Lys-27' of histone H3, leading to transcriptional repression of the affected target gene. Able to mono-, di- and trimethylate 'Lys-27' of histone H3 to form H3K27me1, H3K27me2 and H3K27me3, respectively. Required for embryonic stem cell derivation and self-renewal, suggesting that it is involved in safeguarding embryonic stem cell identity. Compared to EZH2-containing complexes, it is less abundant in embryonic stem cells, has weak methyltransferase activity and plays a less critical role in forming H3K27me3, which is required for embryonic stem cell identity and proper differentiation. This is Histone-lysine N-methyltransferase EZH1 (Ezh1) from Mus musculus (Mouse).